The following is a 145-amino-acid chain: CASP-like protein SELMODRAFT_406854 (145 aa).

At 1 to 31 the chain is on the cytoplasmic side; that stretch reads MGVASQSSVANEAGAAPEASIQQTLRGFSSP. The chain crosses the membrane as a helical span at residues 32 to 52; that stretch reads TSLLLRIATAVLCTLTLAFLV. Over 53–75 the chain is Extracellular; it reads TSKERKEIASIDIVAIWSNSKAL. A helical transmembrane segment spans residues 76–96; it reads IFLAVVSGICLGYSLLHAAVF. Residues 97–112 lie on the Cytoplasmic side of the membrane; the sequence is LVMLSGNRKPLARKKA. Residues 113–133 traverse the membrane as a helical segment; it reads LDWMVFLADQVFFKIFCWFSI. Residues 134–145 lie on the Extracellular side of the membrane; it reads RVSSRRSKAGFV.

It belongs to the Casparian strip membrane proteins (CASP) family. In terms of assembly, homodimer and heterodimers.

It is found in the cell membrane. The protein is CASP-like protein SELMODRAFT_406854 of Selaginella moellendorffii (Spikemoss).